Here is a 95-residue protein sequence, read N- to C-terminus: Aspartyl/glutamyl-tRNA(Asn/Gln) amidotransferase subunit C (95 aa).

The protein belongs to the GatC family. As to quaternary structure, heterotrimer of A, B and C subunits.

The enzyme catalyses L-glutamyl-tRNA(Gln) + L-glutamine + ATP + H2O = L-glutaminyl-tRNA(Gln) + L-glutamate + ADP + phosphate + H(+). It catalyses the reaction L-aspartyl-tRNA(Asn) + L-glutamine + ATP + H2O = L-asparaginyl-tRNA(Asn) + L-glutamate + ADP + phosphate + 2 H(+). Its function is as follows. Allows the formation of correctly charged Asn-tRNA(Asn) or Gln-tRNA(Gln) through the transamidation of misacylated Asp-tRNA(Asn) or Glu-tRNA(Gln) in organisms which lack either or both of asparaginyl-tRNA or glutaminyl-tRNA synthetases. The reaction takes place in the presence of glutamine and ATP through an activated phospho-Asp-tRNA(Asn) or phospho-Glu-tRNA(Gln). This chain is Aspartyl/glutamyl-tRNA(Asn/Gln) amidotransferase subunit C, found in Jannaschia sp. (strain CCS1).